Here is a 314-residue protein sequence, read N- to C-terminus: Olfactory receptor 5D14 (314 aa).

Topologically, residues 1–27 (MMMVLRNLSMEPTFALLGFTDYPKLQI) are extracellular. An N-linked (GlcNAc...) asparagine glycan is attached at Asn-7. The chain crosses the membrane as a helical span at residues 28-48 (PLFLVFLLMYVITVVGNLGMI). The Cytoplasmic portion of the chain corresponds to 49–56 (IIIKINPK). Residues 57-77 (FHTPMYFFLSHLSFVDFCYSS) traverse the membrane as a helical segment. Topologically, residues 78 to 101 (IVTPKLLENLVMADKSIFYFSCMM) are extracellular. Residues 102–122 (QYFLSCTAVVTESFLLAVMAY) form a helical membrane-spanning segment. The Cytoplasmic segment spans residues 123 to 141 (DRFVAICNPLLYTVAMSQR). Residues 142–162 (LCALLVAGSYLWGMFGPLVLL) traverse the membrane as a helical segment. Over 163–198 (CYALRLNFSGPNVINHFFCEYTALISVSGSDILIPH) the chain is Extracellular. The N-linked (GlcNAc...) asparagine glycan is linked to Asn-169. A helical membrane pass occupies residues 199 to 219 (LLLFSFATFNEMCTLLIILTS). At 220 to 239 (YVFIFVTVLKIRSVSGRHKA) the chain is on the cytoplasmic side. Residues 240–260 (FSTWASHLTSITIFHGTILFL) traverse the membrane as a helical segment. The Extracellular portion of the chain corresponds to 261–273 (YCVPNSKNSRQTV). A helical membrane pass occupies residues 274–294 (KVASVFYTVVNPMLNPLIYSL). The Cytoplasmic portion of the chain corresponds to 295–314 (RNKDVKDAFWKLIHTQVPFH).

It belongs to the G-protein coupled receptor 1 family.

The protein resides in the cell membrane. In terms of biological role, odorant receptor. In Homo sapiens (Human), this protein is Olfactory receptor 5D14 (OR5D14).